The sequence spans 94 residues: Small ribosomal subunit protein bS6 (94 aa).

This sequence belongs to the bacterial ribosomal protein bS6 family.

In terms of biological role, binds together with bS18 to 16S ribosomal RNA. This chain is Small ribosomal subunit protein bS6, found in Desulforudis audaxviator (strain MP104C).